The primary structure comprises 1396 residues: DNA-directed RNA polymerase subunit beta' (1396 aa).

The Zn(2+) site is built by C70, C72, C85, and C88. Residues D460, D462, and D464 each coordinate Mg(2+). Zn(2+) contacts are provided by C807, C881, C888, and C891. Residues 1361-1378 (EPEEIEEPVPEDLEDETA) show a composition bias toward acidic residues. The segment at 1361 to 1396 (EPEEIEEPVPEDLEDETAGADSAQAASEESVAEGKD) is disordered. Residues 1379-1389 (GADSAQAASEE) show a composition bias toward low complexity.

It belongs to the RNA polymerase beta' chain family. In terms of assembly, the RNAP catalytic core consists of 2 alpha, 1 beta, 1 beta' and 1 omega subunit. When a sigma factor is associated with the core the holoenzyme is formed, which can initiate transcription. Mg(2+) serves as cofactor. The cofactor is Zn(2+).

It carries out the reaction RNA(n) + a ribonucleoside 5'-triphosphate = RNA(n+1) + diphosphate. In terms of biological role, DNA-dependent RNA polymerase catalyzes the transcription of DNA into RNA using the four ribonucleoside triphosphates as substrates. This Syntrophotalea carbinolica (strain DSM 2380 / NBRC 103641 / GraBd1) (Pelobacter carbinolicus) protein is DNA-directed RNA polymerase subunit beta'.